The sequence spans 602 residues: Elongation factor 4 (602 aa).

Residues 7-189 (RNIRNFSIIA…AIVQRIPAPQ (183 aa)) form the tr-type G domain. Residues 19-24 (DHGKST) and 136-139 (NKID) contribute to the GTP site.

The protein belongs to the TRAFAC class translation factor GTPase superfamily. Classic translation factor GTPase family. LepA subfamily.

The protein localises to the cell inner membrane. It carries out the reaction GTP + H2O = GDP + phosphate + H(+). Required for accurate and efficient protein synthesis under certain stress conditions. May act as a fidelity factor of the translation reaction, by catalyzing a one-codon backward translocation of tRNAs on improperly translocated ribosomes. Back-translocation proceeds from a post-translocation (POST) complex to a pre-translocation (PRE) complex, thus giving elongation factor G a second chance to translocate the tRNAs correctly. Binds to ribosomes in a GTP-dependent manner. The sequence is that of Elongation factor 4 from Xylella fastidiosa (strain M12).